The following is a 131-amino-acid chain: Bacteriohemerythrin (131 aa).

Fe cation-binding residues include His-22, His-58, Glu-62, His-77, His-81, His-117, and Asp-122.

Belongs to the hemerythrin family. In terms of assembly, monomer.

Oxygen-binding protein. May be involved in a storage mechanism or for delivery to oxygen-requiring enzymes. The oxygen-binding site contains two iron atoms. This is Bacteriohemerythrin from Methylococcus capsulatus (strain ATCC 33009 / NCIMB 11132 / Bath).